A 916-amino-acid chain; its full sequence is Oxoglutarate dehydrogenase (916 aa).

Belongs to the alpha-ketoglutarate dehydrogenase family. As to quaternary structure, homodimer. Part of the 2-oxoglutarate dehydrogenase (OGDH) complex composed of E1 (2-oxoglutarate dehydrogenase), E2 (dihydrolipoamide succinyltransferase) and E3 (dihydrolipoamide dehydrogenase); the complex contains multiple copies of the three enzymatic components (E1, E2 and E3). Thiamine diphosphate serves as cofactor.

It carries out the reaction N(6)-[(R)-lipoyl]-L-lysyl-[protein] + 2-oxoglutarate + H(+) = N(6)-[(R)-S(8)-succinyldihydrolipoyl]-L-lysyl-[protein] + CO2. Its function is as follows. E1 component of the 2-oxoglutarate dehydrogenase (OGDH) complex which catalyzes the decarboxylation of 2-oxoglutarate, the first step in the conversion of 2-oxoglutarate to succinyl-CoA and CO(2). This chain is Oxoglutarate dehydrogenase (sucA), found in Buchnera aphidicola subsp. Baizongia pistaciae (strain Bp).